We begin with the raw amino-acid sequence, 562 residues long: MDEAEYGRFVDWDKMEAGGQEQSPKVLSCTDFQELKQMARQGHWAKSHTLRAKVYQKLIKEIPCRTVTPDASVYRDIVGKIVGKRSASSLPLPEFVDDRQIPSYSLNSEGTGAVRKIISCISNQFPDISFCPALPSLVALLLHYSQDEAECFENVSRILACNDPNRRLVDQTFLAFESSCMTFGDLAGKYCQGPHKLMVAVSEDVLELYSDWQRWIFGELPFAYITRVFDVFLVEGYKVLFRVALALLKFFHKVRGGQPMESNNVKRDLQMFVRDLNKCVTPEKLLEKAFAIRLFSRKEIQLLQMANEKALQQKGITVKQKRQNVHLAVHAENFTSEIVSVKEMRDIWSWIPERFALSQPLLLFTNREHGNSLSRFYLHCEGHEPTLLLIKTTNQEVCGAFLSTDWSERKRSGNKLSFFGTGECFVFRLQPEVERYEWVVIKHPELGKVNSSSADKEANSSQSDKDGIDPSSRLSPFLATRHFNLPSKTASMFMAGSIDCIIIGGGDGQALYLDPDLNYGRTSHCNTFNNQPLCSETFQISIIEVWGFKDNMNNDGAHSALH.

Residues lysine 36, arginine 40, lysine 238, arginine 242, and 293-297 (RLFSR) each bind a 1,2-diacyl-sn-glycero-3-phospho-(1D-myo-inositol). In terms of domain architecture, Rab-GAP TBC spans 42–259 (GHWAKSHTLR…FFHKVRGGQP (218 aa)). A TLDc domain is found at 337 to 549 (EIVSVKEMRD…ISIIEVWGFK (213 aa)). The tract at residues 450 to 471 (NSSSADKEANSSQSDKDGIDPS) is disordered. The segment covering 454–468 (ADKEANSSQSDKDGI) has biased composition (basic and acidic residues).

Interacts with ARF6.

Its subcellular location is the cell membrane. It localises to the cytoplasm. It is found in the cytoplasmic vesicle membrane. The protein localises to the presynapse. Its function is as follows. May act as a GTPase-activating protein for Rab family protein(s). Involved in neuronal projections development, probably through a negative modulation of ARF6 function. Involved in the regulation of synaptic vesicle trafficking. The polypeptide is TBC1 domain family member 24 (tbc1d24) (Xenopus laevis (African clawed frog)).